The sequence spans 357 residues: Tribbles homolog 3 (357 aa).

A disordered region spans residues 1–63 (MRASPLAVPA…PAPVHAPDVT (63 aa)). Residues 1–127 (MRASPLAVPA…GHVARPAEVL (127 aa)) are interaction with DDIT3/CHOP. Residues 68-316 (LGPYVLLEPE…SGILLHPWLR (249 aa)) form the Protein kinase domain. The segment at 333–357 (DQVVPEGPGLEEAEEEGERDMGLYG) is disordered. A compositionally biased stretch (acidic residues) spans 341–350 (GLEEAEEEGE).

This sequence belongs to the protein kinase superfamily. CAMK Ser/Thr protein kinase family. Tribbles subfamily. As to quaternary structure, interacts with AKT1, AKT2, MAP2K1 and MAP2K7. Interacts with ATF4. Interacts with DDIT3/CHOP and inhibits its interaction with EP300/P300. Interacts with APOBEC3C. Interacts (via N-terminus) with APOBEC3A. Interacts with RELA.

Its subcellular location is the nucleus. Its function is as follows. Inactive protein kinase which acts as a regulator of the integrated stress response (ISR), a process for adaptation to various stress. Inhibits the transcriptional activity of DDIT3/CHOP and is involved in DDIT3/CHOP-dependent cell death during ER stress. May play a role in programmed neuronal cell death but does not appear to affect non-neuronal cells. Acts as a negative feedback regulator of the ATF4-dependent transcription during the ISR: while TRIB3 expression is promoted by ATF4, TRIB3 protein interacts with ATF4 and inhibits ATF4 transcription activity. Disrupts insulin signaling by binding directly to Akt kinases and blocking their activation. May bind directly to and mask the 'Thr-308' phosphorylation site in AKT1. Interacts with the NF-kappa-B transactivator p65 RELA and inhibits its phosphorylation and thus its transcriptional activation activity. Interacts with MAPK kinases and regulates activation of MAP kinases. Can inhibit APOBEC3A editing of nuclear DNA. The protein is Tribbles homolog 3 (TRIB3) of Bos taurus (Bovine).